Reading from the N-terminus, the 556-residue chain is Urocanate hydratase (556 aa).

Residues Gly-52–Gly-53, Gln-130, Gly-176–Gly-178, Glu-196, Arg-201, Asn-243–Ala-244, Gln-264–His-268, Tyr-274–Leu-275, and Tyr-323 contribute to the NAD(+) site. Cys-411 is an active-site residue. Gly-493 contacts NAD(+).

It belongs to the urocanase family. NAD(+) is required as a cofactor.

Its subcellular location is the cytoplasm. The catalysed reaction is 4-imidazolone-5-propanoate = trans-urocanate + H2O. Its pathway is amino-acid degradation; L-histidine degradation into L-glutamate; N-formimidoyl-L-glutamate from L-histidine: step 2/3. In terms of biological role, catalyzes the conversion of urocanate to 4-imidazolone-5-propionate. This is Urocanate hydratase from Rhodospirillum rubrum (strain ATCC 11170 / ATH 1.1.1 / DSM 467 / LMG 4362 / NCIMB 8255 / S1).